The following is a 210-amino-acid chain: Ribosomal RNA large subunit methyltransferase E (210 aa).

5 residues coordinate S-adenosyl-L-methionine: glycine 61, tryptophan 63, aspartate 81, aspartate 97, and aspartate 122. Lysine 162 acts as the Proton acceptor in catalysis.

It belongs to the class I-like SAM-binding methyltransferase superfamily. RNA methyltransferase RlmE family.

The protein resides in the cytoplasm. It catalyses the reaction uridine(2552) in 23S rRNA + S-adenosyl-L-methionine = 2'-O-methyluridine(2552) in 23S rRNA + S-adenosyl-L-homocysteine + H(+). In terms of biological role, specifically methylates the uridine in position 2552 of 23S rRNA at the 2'-O position of the ribose in the fully assembled 50S ribosomal subunit. This chain is Ribosomal RNA large subunit methyltransferase E, found in Xanthomonas oryzae pv. oryzae (strain MAFF 311018).